The following is a 252-amino-acid chain: Bridging integrator 3 homolog (252 aa).

Residues 8–231 (GGPKKQIVPK…VDEVQLSDAE (224 aa)) enclose the BAR domain. Coiled-coil stretches lie at residues 17 to 57 (KTVE…MSKS), 119 to 150 (SLNM…KDKT), and 224 to 244 (EVQL…AELR).

The protein localises to the cytoplasm. It is found in the cytoskeleton. Functionally, involved in cytokinesis and septation where it has a role in the localization of F-actin. The polypeptide is Bridging integrator 3 homolog (bin3) (Xenopus laevis (African clawed frog)).